Reading from the N-terminus, the 369-residue chain is Chaperone protein DnaJ (369 aa).

The J domain occupies 4-69 (SYYEILEVEK…KKRALYDRYG (66 aa)). The segment at 130 to 207 (GCKKTIKVQY…CKGKTYILKD (78 aa)) adopts a CR-type zinc-finger fold. Residues C143, C146, C159, C162, C181, C184, C195, and C198 each contribute to the Zn(2+) site. 4 CXXCXGXG motif repeats span residues 143–150 (CESCDGTG), 159–166 (CKQCNGQG), 181–188 (CGACQGKG), and 195–202 (CQACKGKT).

The protein belongs to the DnaJ family. Homodimer. Zn(2+) is required as a cofactor.

The protein resides in the cytoplasm. Its function is as follows. Participates actively in the response to hyperosmotic and heat shock by preventing the aggregation of stress-denatured proteins and by disaggregating proteins, also in an autonomous, DnaK-independent fashion. Unfolded proteins bind initially to DnaJ; upon interaction with the DnaJ-bound protein, DnaK hydrolyzes its bound ATP, resulting in the formation of a stable complex. GrpE releases ADP from DnaK; ATP binding to DnaK triggers the release of the substrate protein, thus completing the reaction cycle. Several rounds of ATP-dependent interactions between DnaJ, DnaK and GrpE are required for fully efficient folding. Also involved, together with DnaK and GrpE, in the DNA replication of plasmids through activation of initiation proteins. The polypeptide is Chaperone protein DnaJ (Helicobacter pylori (strain ATCC 700392 / 26695) (Campylobacter pylori)).